A 97-amino-acid chain; its full sequence is Co-chaperonin GroES (97 aa).

The protein belongs to the GroES chaperonin family. Heptamer of 7 subunits arranged in a ring. Interacts with the chaperonin GroEL.

It is found in the cytoplasm. Together with the chaperonin GroEL, plays an essential role in assisting protein folding. The GroEL-GroES system forms a nano-cage that allows encapsulation of the non-native substrate proteins and provides a physical environment optimized to promote and accelerate protein folding. GroES binds to the apical surface of the GroEL ring, thereby capping the opening of the GroEL channel. The sequence is that of Co-chaperonin GroES from Baumannia cicadellinicola subsp. Homalodisca coagulata.